We begin with the raw amino-acid sequence, 1781 residues long: Atrochrysone carboxylic acid synthase (1781 aa).

The interval 15–253 (TRDLFRRLHV…KHVALPVYAG (239 aa)) is N-terminal acylcarrier protein transacylase domain (SAT). The Ketosynthase family 3 (KS3) domain maps to 390-823 (QSKIAIVGMA…GGNTSVVVEE (434 aa)). Residues Cys-563, His-698, and His-741 each act as for beta-ketoacyl synthase activity in the active site. The segment at 925–1244 (FAFTGQGASH…SLGLLHCAGL (320 aa)) is malonyl-CoA:ACP transacylase (MAT) domain. A product template (PT) domain region spans residues 1312–1631 (TSTVQQIIEE…RVLLNRFFSA (320 aa)). An N-terminal hotdog fold region spans residues 1316–1451 (QQIIEETFSD…ADIVYGLPTD (136 aa)). Positions 1316–1626 (QQIIEETFSD…FRRYPRVLLN (311 aa)) constitute a PKS/mFAS DH domain. His-1348 (proton acceptor; for dehydratase activity) is an active-site residue. Residues 1478 to 1626 (IANRLSHNMA…FRRYPRVLLN (149 aa)) form a C-terminal hotdog fold region. Asp-1537 (proton donor; for dehydratase activity) is an active-site residue. The disordered stretch occupies residues 1633–1653 (DSDTSKHTSATDVSPPKKVVQ). The Carrier domain maps to 1703–1780 (VDSDSTASKA…DLKAWLMEYY (78 aa)). Ser-1740 is subject to O-(pantetheine 4'-phosphoryl)serine.

The catalysed reaction is holo-[ACP] + 8 malonyl-CoA + 8 H(+) = atrochrysone carboxyl-[ACP] + 8 CO2 + 8 CoA + 2 H2O. Its pathway is secondary metabolite biosynthesis. Functionally, atrochrysone carboxylic acid synthase; part of the gene cluster that mediates the biosynthesis of the dimeric xanthones cryptosporioptides. The pathway begins with the synthesis of atrochrysone thioester by the polyketide synthase dmx-nrPKS. The atrochrysone carboxyl ACP thioesterase dmxR1 then breaks the thioester bond and releases the atrochrysone carboxylic acid from dmx-nrPKS. Atrochrysone carboxylic acid is decarboxylated by the decarboxylase dmxR15, and oxidized by the anthrone oxygenase dmxR16 to yield emodin. Emodin is then reduced to emodin hydroquinone by the oxidoreductase dmxR7. A-ring reduction by the short chain dehydrogenase dmxR18, dehydration by the scytalone dehydratase-like protein dmxR17 and probable spontaneous re-oxidation, results in overall deoxygenation to chrysophanol. Baeyer-Villiger oxidation by the Baeyer-Villiger monooxygenase (BVMO) dmxR6 then yields monodictylactone in equilibrium with monodictyphenone. In the case of the cryptosporioptides biosynthesis, monodictylactone is reduced at C-12 to an alcohol (by the short chain dehydrogenases dmxR12 or dmxR8) and hydroxylated at C-5 by dmxR9, yielding the electron-rich aromatic which could eliminate H(2)O to form the ortho-quinonemethide, followed by tautomerisation to paraquinone and complete the formal reduction to produce the 10-methylgroup. Conjugate addition of C-4a-OH to the resulting paraquinone by the monooxygenase dmxR10 then gives cyclohexadienone, which is then reduced at C-5 by the short chain dehydrogenase dmxR3 to give the dihydroxanthone. The 6,7-epoxide in the cryptosporioptides could be introduced by the cytochrome P450 monooxygenase dmxL3. The highly reducing PKS dmxL2 manufactures butyrate, which is further carboxylated by dmxL1 to form ethylmalonate. It is not yet clear whether the carboxylation occurs while the butyrate is attached to the ACP of dmxL2, but this unusual fungal metabolite could then be esterified to O-5 by the O-acetyltransferase dmxR13. Finally, dimerization performed by dmxR5 gives the observed dimers cryptosporioptides A, B and C as the final products of the pathway. This chain is Atrochrysone carboxylic acid synthase, found in Cryptosporiopsis sp. (strain 8999).